Reading from the N-terminus, the 76-residue chain is Defensin-like protein 155 (76 aa).

The N-terminal stretch at 1 to 27 (MAKISCSYLLILMLALSVFSVVEKAKG) is a signal peptide. 4 disulfide bridges follow: Cys-31/Cys-76, Cys-40/Cys-59, Cys-45/Cys-70, and Cys-49/Cys-72.

It belongs to the DEFL family.

The protein localises to the secreted. The sequence is that of Defensin-like protein 155 (LCR36) from Arabidopsis thaliana (Mouse-ear cress).